A 117-amino-acid polypeptide reads, in one-letter code: Large ribosomal subunit protein uL18 (117 aa).

This sequence belongs to the universal ribosomal protein uL18 family. As to quaternary structure, part of the 50S ribosomal subunit; part of the 5S rRNA/L5/L18/L25 subcomplex. Contacts the 5S and 23S rRNAs.

In terms of biological role, this is one of the proteins that bind and probably mediate the attachment of the 5S RNA into the large ribosomal subunit, where it forms part of the central protuberance. This chain is Large ribosomal subunit protein uL18, found in Vibrio campbellii (strain ATCC BAA-1116).